The primary structure comprises 87 residues: Small ribosomal subunit protein uS15c (87 aa).

Belongs to the universal ribosomal protein uS15 family. As to quaternary structure, part of the 30S ribosomal subunit.

It localises to the plastid. It is found in the chloroplast. The protein is Small ribosomal subunit protein uS15c (rps15) of Amborella trichopoda.